The chain runs to 360 residues: MTLTALGMPALRSRTNGIADPRVVPTTGPLVDTFGRVANDLRVSLTDRCNLRCSYCMPERGLRWLPGEQLLRPDELARLIHIAVTRLGVTSVRFTGGEPLLAHHLDEVVAATARLRPRPEISLTTNGVGLARRAGALAEAGLDRVNVSLDSIDRAHFAAITRRDRLAHVLAGLAAAKAAGLTPVKVNAVLDPTTGREDVVDLLRFCLERGYQLRVIEQMPLDAGHSWRRNIALSADDVLAALRPHFRLRPDPAPRGSAPAELWLVDAGPNTPRGRFGVIASVSHAFCSTCDRTRLTADGQIRSCLFSTEETDLRRLLRGGADDDAIEAAWRAAMWSKPAGHGINAPDFIQPDRPMSAIGG.

Positions 33–259 constitute a Radical SAM core domain; the sequence is TFGRVANDLR…PDPAPRGSAP (227 aa). Arginine 42 contributes to the GTP binding site. [4Fe-4S] cluster is bound by residues cysteine 49 and cysteine 53. Tyrosine 55 contacts S-adenosyl-L-methionine. Residue cysteine 56 participates in [4Fe-4S] cluster binding. Arginine 93 is a GTP binding site. Glycine 97 provides a ligand contact to S-adenosyl-L-methionine. Threonine 124 contacts GTP. S-adenosyl-L-methionine is bound at residue serine 148. Lysine 185 provides a ligand contact to GTP. Residue methionine 219 participates in S-adenosyl-L-methionine binding. Residues cysteine 287 and cysteine 290 each coordinate [4Fe-4S] cluster. Residue 292–294 coordinates GTP; that stretch reads RTR. A [4Fe-4S] cluster-binding site is contributed by cysteine 304.

The protein belongs to the radical SAM superfamily. MoaA family. Monomer and homodimer. [4Fe-4S] cluster is required as a cofactor.

It catalyses the reaction GTP + AH2 + S-adenosyl-L-methionine = (8S)-3',8-cyclo-7,8-dihydroguanosine 5'-triphosphate + 5'-deoxyadenosine + L-methionine + A + H(+). Its pathway is cofactor biosynthesis; molybdopterin biosynthesis. Catalyzes the cyclization of GTP to (8S)-3',8-cyclo-7,8-dihydroguanosine 5'-triphosphate. The chain is GTP 3',8-cyclase 2 from Mycobacterium bovis (strain ATCC BAA-935 / AF2122/97).